A 147-amino-acid chain; its full sequence is Large ribosomal subunit protein bL9 (147 aa).

Belongs to the bacterial ribosomal protein bL9 family.

Binds to the 23S rRNA. This chain is Large ribosomal subunit protein bL9, found in Marinomonas sp. (strain MWYL1).